The sequence spans 298 residues: Probable oxidoreductase (298 aa).

9-33 (VVTGGASGLGAETVRALAAAGAEVT) serves as a coordination point for NAD(+). Position 139 (Ser-139) interacts with substrate. Tyr-165 functions as the Proton acceptor in the catalytic mechanism.

The protein belongs to the short-chain dehydrogenases/reductases (SDR) family.

This chain is Probable oxidoreductase, found in Streptomyces antibioticus.